A 371-amino-acid chain; its full sequence is UDP-N-acetylglucosamine--N-acetylmuramyl-(pentapeptide) pyrophosphoryl-undecaprenol N-acetylglucosamine transferase (371 aa).

UDP-N-acetyl-alpha-D-glucosamine contacts are provided by residues 15-17, Asn-126, Arg-172, Ser-199, Ile-256, 275-280, and Gln-301; these read TGG and ALTVSE.

It belongs to the glycosyltransferase 28 family. MurG subfamily.

It is found in the cell inner membrane. It carries out the reaction di-trans,octa-cis-undecaprenyl diphospho-N-acetyl-alpha-D-muramoyl-L-alanyl-D-glutamyl-meso-2,6-diaminopimeloyl-D-alanyl-D-alanine + UDP-N-acetyl-alpha-D-glucosamine = di-trans,octa-cis-undecaprenyl diphospho-[N-acetyl-alpha-D-glucosaminyl-(1-&gt;4)]-N-acetyl-alpha-D-muramoyl-L-alanyl-D-glutamyl-meso-2,6-diaminopimeloyl-D-alanyl-D-alanine + UDP + H(+). The protein operates within cell wall biogenesis; peptidoglycan biosynthesis. In terms of biological role, cell wall formation. Catalyzes the transfer of a GlcNAc subunit on undecaprenyl-pyrophosphoryl-MurNAc-pentapeptide (lipid intermediate I) to form undecaprenyl-pyrophosphoryl-MurNAc-(pentapeptide)GlcNAc (lipid intermediate II). This is UDP-N-acetylglucosamine--N-acetylmuramyl-(pentapeptide) pyrophosphoryl-undecaprenol N-acetylglucosamine transferase from Francisella tularensis subsp. tularensis (strain WY96-3418).